A 190-amino-acid polypeptide reads, in one-letter code: Lipid A 1-phosphatase (190 aa).

The next 5 helical transmembrane spans lie at 22 to 42 (LLAL…PKVP), 60 to 80 (FIPT…VGLF), 117 to 137 (GNFN…AFLM), 145 to 162 (YFWL…RIYL), and 164 to 184 (MHTI…VSLF).

It belongs to the lipid A LpxE 1-phosphatase family. Does not require divalent cations. is required as a cofactor.

It is found in the cell inner membrane. It functions in the pathway bacterial outer membrane biogenesis; LPS lipid A biosynthesis. Its function is as follows. Removes the 1-phosphate group from tetra- and probably hexaacylated lipid A species, has no requirement for the Kdo moiety of lipid A. Has no 4'-phosphatase activity. Has no activity on phospholipids (phosphatidylglycerol, phosphatidylethanolamine or cardiolipin). This enzyme has to act before EptA can attach phosphoethanolamine to the 1-position of lipid A. Absence of the 1-phosphate group renders the bacteria partially resistant to host-derived cationic antimicrobial peptides (CAMP), allowing it to camouflage itself from the host innate immune response, and plays a role in the long-term colonization of the host's stomach. The chain is Lipid A 1-phosphatase from Helicobacter pylori (strain ATCC 700392 / 26695) (Campylobacter pylori).